A 99-amino-acid polypeptide reads, in one-letter code: MANMFLMFYLSMIMFLFGCMVFVSNRKHLLSTLLSLEYMVLSLFIFLFFYLNFMNYEMYFSMFFLTFCVCEGVLGLSILVSMIRTHGNDYFQSFSILQC.

3 helical membrane passes run 4 to 24 (MFLM…VFVS), 29 to 49 (LLST…FLFF), and 63 to 83 (FFLT…VSMI).

It belongs to the complex I subunit 4L family.

The protein localises to the mitochondrion membrane. It carries out the reaction a ubiquinone + NADH + 5 H(+)(in) = a ubiquinol + NAD(+) + 4 H(+)(out). In terms of biological role, core subunit of the mitochondrial membrane respiratory chain NADH dehydrogenase (Complex I) that is believed to belong to the minimal assembly required for catalysis. Complex I functions in the transfer of electrons from NADH to the respiratory chain. The immediate electron acceptor for the enzyme is believed to be ubiquinone. The sequence is that of NADH-ubiquinone oxidoreductase chain 4L (ND4L) from Anopheles quadrimaculatus (Common malaria mosquito).